The chain runs to 187 residues: ATP synthase subunit b, chloroplastic (187 aa).

The chain crosses the membrane as a helical span at residues 34-56; the sequence is IINLSVVLGLVFTLGRNFLISLL.

This sequence belongs to the ATPase B chain family. As to quaternary structure, F-type ATPases have 2 components, F(1) - the catalytic core - and F(0) - the membrane proton channel. F(1) has five subunits: alpha(3), beta(3), gamma(1), delta(1), epsilon(1). F(0) has four main subunits: a(1), b(1), b'(1) and c(10-14). The alpha and beta chains form an alternating ring which encloses part of the gamma chain. F(1) is attached to F(0) by a central stalk formed by the gamma and epsilon chains, while a peripheral stalk is formed by the delta, b and b' chains.

It localises to the plastid. Its subcellular location is the chloroplast thylakoid membrane. Its function is as follows. F(1)F(0) ATP synthase produces ATP from ADP in the presence of a proton or sodium gradient. F-type ATPases consist of two structural domains, F(1) containing the extramembraneous catalytic core and F(0) containing the membrane proton channel, linked together by a central stalk and a peripheral stalk. During catalysis, ATP synthesis in the catalytic domain of F(1) is coupled via a rotary mechanism of the central stalk subunits to proton translocation. Component of the F(0) channel, it forms part of the peripheral stalk, linking F(1) to F(0). This chain is ATP synthase subunit b, chloroplastic, found in Pleurastrum terricola (Filamentous green alga).